The following is a 195-amino-acid chain: Peptide deformylase (195 aa).

Fe cation contacts are provided by Cys102 and His144. Glu145 is an active-site residue. His148 is a Fe cation binding site.

Belongs to the polypeptide deformylase family. Fe(2+) is required as a cofactor.

The enzyme catalyses N-terminal N-formyl-L-methionyl-[peptide] + H2O = N-terminal L-methionyl-[peptide] + formate. Removes the formyl group from the N-terminal Met of newly synthesized proteins. Requires at least a dipeptide for an efficient rate of reaction. N-terminal L-methionine is a prerequisite for activity but the enzyme has broad specificity at other positions. The protein is Peptide deformylase of Salinibacter ruber (strain DSM 13855 / M31).